Reading from the N-terminus, the 137-residue chain is Large ribosomal subunit protein eL28 (137 aa).

Ser-2 is modified (N-acetylserine). Residues Lys-58 and Lys-65 each participate in a glycyl lysine isopeptide (Lys-Gly) (interchain with G-Cter in SUMO2) cross-link. Residue Ser-115 is modified to Phosphoserine.

It belongs to the eukaryotic ribosomal protein eL28 family. As to quaternary structure, component of the large ribosomal subunit.

The protein resides in the cytoplasm. In terms of biological role, component of the large ribosomal subunit. The ribosome is a large ribonucleoprotein complex responsible for the synthesis of proteins in the cell. The sequence is that of Large ribosomal subunit protein eL28 (Rpl28) from Mus musculus (Mouse).